A 479-amino-acid polypeptide reads, in one-letter code: Cobyric acid synthase (479 aa).

A GATase cobBQ-type domain is found at 250–442 (TRTVAVVAYP…LHGLFEDAAA (193 aa)). Catalysis depends on Cys-331, which acts as the Nucleophile. His-434 is an active-site residue.

The protein belongs to the CobB/CobQ family. CobQ subfamily.

The protein operates within cofactor biosynthesis; adenosylcobalamin biosynthesis. Catalyzes amidations at positions B, D, E, and G on adenosylcobyrinic A,C-diamide. NH(2) groups are provided by glutamine, and one molecule of ATP is hydrogenolyzed for each amidation. In Variovorax paradoxus (strain S110), this protein is Cobyric acid synthase.